The primary structure comprises 814 residues: Rap guanine nucleotide exchange factor 5 (814 aa).

The DEP domain maps to 43–118 (LQAADLVKDR…DNYVFYQFSS (76 aa)). The N-terminal Ras-GEF domain maps to 301 to 434 (ARYVVVSGTP…ELKEFQKILG (134 aa)). The region spanning 578–813 (NTWDLALELM…FELSHRLEPR (236 aa)) is the Ras-GEF domain.

The protein resides in the nucleus. Functionally, guanine nucleotide exchange factor (GEF) for RAP1A, RAP2A and MRAS/M-Ras-GTP. Its association with MRAS inhibits Rap1 activation. The sequence is that of Rap guanine nucleotide exchange factor 5 (Rapgef5) from Mus musculus (Mouse).